Here is a 284-residue protein sequence, read N- to C-terminus: Four and a half LIM domains protein 5 (284 aa).

The C4-type zinc-finger motif lies at 8–32 (CQYCTSSLIGKKYVLKDDNLYCISC). LIM zinc-binding domains follow at residues 39–100 (NYCE…ECSS), 101–160 (KCFH…KEFA), and 161–220 (HYCN…LYAK).

As to quaternary structure, interacts with CREM (via the third LIM domain). Interacts (via second LIM domain) with SPAG8. As to expression, testis-specific, temporal expression is coordinated with CREM.

It is found in the nucleus. May be involved in the regulation of spermatogenesis. Stimulates CREM transcriptional activity in a phosphorylation-independent manner. This chain is Four and a half LIM domains protein 5 (Fhl5), found in Mus musculus (Mouse).